We begin with the raw amino-acid sequence, 478 residues long: Divinyl ether synthase CYP74D1 (478 aa).

A heme-binding site is contributed by C431.

The protein belongs to the cytochrome P450 family. 9-divinyl ether synthase subfamily. In terms of tissue distribution, expressed in roots. Detected in stems, but not in flower buds, petioles, cotyledons or leaves.

It carries out the reaction (9S)-hydroperoxy-(10E,12Z)-octadecadienoate = colneleate + H2O. It catalyses the reaction (9S)-hydroperoxy-(10E,12Z,15Z)-octadecatrienoate = colnelenate + H2O. Its function is as follows. Involved in the biosynthesis of the anti-fungal toxins colneleate and colnelenate. Can use (9S)-hydroperoxy-(10E,12Z)-octadecadienoate (9-HPOD) and (9S)-hydroperoxy-(10E,12Z,15Z)-octadecatrienoate (9-HPOT) as substrates, but has a very low activity with the corresponding 13-hydroperoxides (13-HPOD and 13-POT). The sequence is that of Divinyl ether synthase CYP74D1 from Solanum lycopersicum (Tomato).